The chain runs to 252 residues: Trans-aconitate 2-methyltransferase (252 aa).

The protein belongs to the methyltransferase superfamily. Tam family.

The protein resides in the cytoplasm. It catalyses the reaction trans-aconitate + S-adenosyl-L-methionine = (E)-3-(methoxycarbonyl)pent-2-enedioate + S-adenosyl-L-homocysteine. Catalyzes the S-adenosylmethionine monomethyl esterification of trans-aconitate. The sequence is that of Trans-aconitate 2-methyltransferase from Escherichia coli (strain ATCC 8739 / DSM 1576 / NBRC 3972 / NCIMB 8545 / WDCM 00012 / Crooks).